Consider the following 1162-residue polypeptide: Sialidase (1162 aa).

BNR repeat units follow at residues 23–34, 163–174, and 209–220; these read KYSVDDGETWET, FYSEDDGKTWKF, and YESSDMEKPWVE. 2 N-linked (GlcNAc...) asparagine glycosylation sites follow: Asn-342 and Asn-394. The interval 587-1123 is disordered; it reads HMDSSSDSSA…STPSTPAGSS (537 aa). The segment covering 589–615 has biased composition (low complexity); that stretch reads DSSSDSSAHSTPSTPADSSAHSTPSTP. Residues 589–1120 are 44 X 12 AA tandem repeats, LTR domain; it reads DSSSDSSAHS…SAHSTPSTPA (532 aa). Polar residues-rich tracts occupy residues 616–689 and 699–1123; these read VDSS…TPVD and PADS…AGSS. Asn-1125 carries an N-linked (GlcNAc...) asparagine glycan.

This sequence belongs to the glycosyl hydrolase 33 family.

Its subcellular location is the cell membrane. The catalysed reaction is Hydrolysis of alpha-(2-&gt;3)-, alpha-(2-&gt;6)-, alpha-(2-&gt;8)- glycosidic linkages of terminal sialic acid residues in oligosaccharides, glycoproteins, glycolipids, colominic acid and synthetic substrates.. In terms of biological role, developmentally regulated neuraminidase implicated in parasite invasion of cells. This chain is Sialidase (TCNA), found in Trypanosoma cruzi.